The sequence spans 217 residues: tRNA (guanine-N(7)-)-methyltransferase (217 aa).

Glu45, Glu70, Asp97, and Asp119 together coordinate S-adenosyl-L-methionine. Residue Asp119 is part of the active site. Position 123 (Lys123) interacts with substrate. The segment at 125–130 (RHEKRR) is interaction with RNA. Substrate contacts are provided by residues Asp155 and 195-198 (TEYE).

The protein belongs to the class I-like SAM-binding methyltransferase superfamily. TrmB family.

The enzyme catalyses guanosine(46) in tRNA + S-adenosyl-L-methionine = N(7)-methylguanosine(46) in tRNA + S-adenosyl-L-homocysteine. It functions in the pathway tRNA modification; N(7)-methylguanine-tRNA biosynthesis. In terms of biological role, catalyzes the formation of N(7)-methylguanine at position 46 (m7G46) in tRNA. This is tRNA (guanine-N(7)-)-methyltransferase from Lactobacillus helveticus (strain DPC 4571).